The primary structure comprises 247 residues: Large ribosomal subunit protein uL30z (247 aa).

It belongs to the universal ribosomal protein uL30 family.

The sequence is that of Large ribosomal subunit protein uL30z (RPL7A) from Arabidopsis thaliana (Mouse-ear cress).